A 150-amino-acid polypeptide reads, in one-letter code: Protein SprT-like (150 aa).

Positions 11–149 constitute a SprT-like domain; the sequence is ELVDKLSLTY…CGKCRGSLKE (139 aa). A Zn(2+)-binding site is contributed by histidine 70. Glutamate 71 is an active-site residue. Histidine 74 provides a ligand contact to Zn(2+).

The protein belongs to the SprT family. Zn(2+) serves as cofactor.

The protein localises to the cytoplasm. The chain is Protein SprT-like from Oceanobacillus iheyensis (strain DSM 14371 / CIP 107618 / JCM 11309 / KCTC 3954 / HTE831).